We begin with the raw amino-acid sequence, 182 residues long: Inner membrane assembly complex subunit 17 (182 aa).

A mitochondrion-targeting transit peptide spans 1 to 45 (MLKRRSNALITLSRTKLFPITTVAYYHRRLLNQQRRAVSTSPKKE). Residues 46–107 (IKSLEDLANL…EIPVKRFIRP (62 aa)) are Mitochondrial matrix-facing. Residues 108–127 (LWMFILMGSSVYLLLHFSWW) form a helical membrane-spanning segment. The stretch at 128-158 (KLEHEERESQLKKEVEILEHQLNELIIQDKT) forms a coiled coil. Topologically, residues 128–182 (KLEHEERESQLKKEVEILEHQLNELIIQDKTHNTSRGKGSNESTHMKPWYRRWFW) are mitochondrial intermembrane.

It belongs to the INA17 family. Component of the inner membrane assembly (INA) complex, composed of INA17 and INA22. Interacts with a subset of F(1)F(0)-ATP synthase subunits of the F(1)-domain and the peripheral stalk.

Its subcellular location is the mitochondrion inner membrane. Functionally, component of the INA complex (INAC) that promotes the biogenesis of mitochondrial F(1)F(0)-ATP synthase. INAC facilitates the assembly of the peripheral stalk and promotes the assembly of the catalytic F(1)-domain with the membrane-embedded F(0)-domain. In Saccharomyces cerevisiae (strain YJM789) (Baker's yeast), this protein is Inner membrane assembly complex subunit 17.